We begin with the raw amino-acid sequence, 758 residues long: Calcium up-regulated protein E (758 aa).

Residues 1–22 (MINIEDISKSSNQSEEKQLKST) form a disordered region. 2 Ricin B-type lectin domains span residues 25-145 (KPKY…WTTF) and 156-288 (GYFQ…WIAN).

Belongs to the cup family.

Its subcellular location is the cytoplasm. It is found in the membrane. In terms of biological role, may play an important role in stabilizing and/or regulating the cell membrane during Ca(2+) stress or certain stages of development. This Dictyostelium discoideum (Social amoeba) protein is Calcium up-regulated protein E (cupE).